We begin with the raw amino-acid sequence, 443 residues long: BBSome complex member BBS5 homolog (443 aa).

The protein belongs to the BBS5 family.

Its subcellular location is the cytoplasm. The protein resides in the cytoskeleton. The protein localises to the flagellum axoneme. The polypeptide is BBSome complex member BBS5 homolog (Giardia intestinalis (strain ATCC 50803 / WB clone C6) (Giardia lamblia)).